The chain runs to 69 residues: Large ribosomal subunit protein uL29 (69 aa).

Belongs to the universal ribosomal protein uL29 family.

In Granulibacter bethesdensis (strain ATCC BAA-1260 / CGDNIH1), this protein is Large ribosomal subunit protein uL29.